A 222-amino-acid polypeptide reads, in one-letter code: Large ribosomal subunit protein bL20 (222 aa).

The protein belongs to the bacterial ribosomal protein bL20 family.

In terms of biological role, binds directly to 23S ribosomal RNA and is necessary for the in vitro assembly process of the 50S ribosomal subunit. It is not involved in the protein synthesizing functions of that subunit. The chain is Large ribosomal subunit protein bL20 (rplT) from Paenarthrobacter aurescens (strain TC1).